The sequence spans 143 residues: High mobility group protein B (143 aa).

The disordered stretch occupies residues 1-22; sequence MSKAASQYATLEDLPSKPKRPQ. The HMG box DNA-binding region spans 18-86; sequence PKRPQTGFFI…TYDKQNDQWK (69 aa). Position 70 is a blocked amino end (Ala) (A70). Composition is skewed to basic and acidic residues over residues 100 to 120 and 131 to 143; these read AKKA…ELEK and AKKD…AKKK. The tract at residues 100–143 is disordered; sequence AKKALKEKTKKSKAAEKELEKSKKKAPAAAPAKKDDKKAPAKKK.

It is found in the nucleus. Its subcellular location is the chromosome. This chain is High mobility group protein B, found in Tetrahymena thermophila.